A 575-amino-acid chain; its full sequence is Beta-amylase 1, chloroplastic (575 aa).

Residues 1 to 41 (MALNLSHQLGVLAGTPIKSGEMTDSSLLSISPPSARMMTPK) constitute a chloroplast transit peptide. Phosphoserine is present on residues serine 55 and serine 59. A disulfide bridge links cysteine 73 with cysteine 511. 3 residues coordinate substrate: aspartate 147, histidine 187, and aspartate 195. Glutamate 279 functions as the Proton donor in the catalytic mechanism. Substrate is bound by residues lysine 392, histidine 397, and threonine 439. The active-site Proton acceptor is glutamate 477. Residues 478-479 (NA) and arginine 517 each bind substrate.

This sequence belongs to the glycosyl hydrolase 14 family. In terms of tissue distribution, expressed in leaves, roots, flowers, pollen, and seeds.

It is found in the plastid. The protein localises to the chloroplast. The enzyme catalyses Hydrolysis of (1-&gt;4)-alpha-D-glucosidic linkages in polysaccharides so as to remove successive maltose units from the non-reducing ends of the chains.. With respect to regulation, redox regulation; active in reducing conditions, inactive in oxidizing conditions. Thioredoxins f1, m1, and y1 mediate the reversible reductive activation of oxidized BAM1. Its function is as follows. Beta-amylase activity. Can use p-nitrophenyl maltopentaoside (PNPG5) as substrate only in reduced form. Can play a minor role in the starch degradation and maltose metabolism in chloroplasts during the night. More active on phosphorylated glucan. Interacts directly with starch or other alpha-1,4-glucan. The sequence is that of Beta-amylase 1, chloroplastic (BAM1) from Arabidopsis thaliana (Mouse-ear cress).